Reading from the N-terminus, the 614-residue chain is Phosphomethylpyrimidine synthase (614 aa).

Substrate contacts are provided by residues asparagine 230, methionine 259, tyrosine 288, histidine 324, 344–346, 385–388, and glutamate 424; these read SRG and DGLR. Residue histidine 428 coordinates Zn(2+). Tyrosine 451 provides a ligand contact to substrate. A Zn(2+)-binding site is contributed by histidine 492. [4Fe-4S] cluster contacts are provided by cysteine 572, cysteine 575, and cysteine 580.

It belongs to the ThiC family. Homodimer. The cofactor is [4Fe-4S] cluster.

The enzyme catalyses 5-amino-1-(5-phospho-beta-D-ribosyl)imidazole + S-adenosyl-L-methionine = 4-amino-2-methyl-5-(phosphooxymethyl)pyrimidine + CO + 5'-deoxyadenosine + formate + L-methionine + 3 H(+). The protein operates within cofactor biosynthesis; thiamine diphosphate biosynthesis. Its function is as follows. Catalyzes the synthesis of the hydroxymethylpyrimidine phosphate (HMP-P) moiety of thiamine from aminoimidazole ribotide (AIR) in a radical S-adenosyl-L-methionine (SAM)-dependent reaction. The polypeptide is Phosphomethylpyrimidine synthase (Stenotrophomonas maltophilia (strain K279a)).